The primary structure comprises 169 residues: Chorion protein E1 (169 aa).

Positions 1 to 19 (MAWFTTVLIVASLLGSLVA) are cleaved as a signal peptide. 2 Tetradecapeptide repeats span residues 114-127 (GAGRGAEMEGKPRS) and 128-141 (GAGKGAEMEGKPKS). A disordered region spans residues 119–169 (AEMEGKPRSGAGKGAEMEGKPKSTESVAETNTVAAGTGVVAEKTGTESSAS). The span at 142–152 (TESVAETNTVA) shows a compositional bias: polar residues.

Its function is as follows. This protein is one of two components of the prominent 'filler' that helps mold the shape of aeropyle crowns. This Antheraea polyphemus (Polyphemus moth) protein is Chorion protein E1.